Consider the following 484-residue polypeptide: uncharacterized protein (484 aa).

12 helical membrane-spanning segments follow: residues 19–39 (LSFG…MIFV), 78–98 (VNWG…WLIV), 110–130 (LFFM…GFII), 134–154 (IFAI…SNYL), 165–185 (FSPF…AGII), 199–219 (IVFL…IILG), 249–269 (TWYW…PFTF), 289–309 (ISVF…TIGL), 321–341 (ISTI…VFVL), 360–380 (LFLF…GVML), 398–418 (FGLI…ITSL), and 440–460 (LGAY…LALL).

It is found in the cell membrane. This is an uncharacterized protein from Mesomycoplasma hyopneumoniae (strain J / ATCC 25934 / NCTC 10110) (Mycoplasma hyopneumoniae).